We begin with the raw amino-acid sequence, 473 residues long: Glutamate--tRNA ligase (473 aa).

The 'HIGH' region motif lies at 11–21; sequence PSPTGFLHIGG. Positions 240–244 match the 'KMSKS' region motif; it reads KLSKR. K243 is a binding site for ATP.

This sequence belongs to the class-I aminoacyl-tRNA synthetase family. Glutamate--tRNA ligase type 1 subfamily. In terms of assembly, monomer.

It localises to the cytoplasm. It carries out the reaction tRNA(Glu) + L-glutamate + ATP = L-glutamyl-tRNA(Glu) + AMP + diphosphate. Its function is as follows. Catalyzes the attachment of glutamate to tRNA(Glu) in a two-step reaction: glutamate is first activated by ATP to form Glu-AMP and then transferred to the acceptor end of tRNA(Glu). The chain is Glutamate--tRNA ligase from Rhodopseudomonas palustris (strain BisB5).